A 453-amino-acid polypeptide reads, in one-letter code: Adenylyltransferase and sulfurtransferase MOCS3 (453 aa).

Phosphothreonine is present on threonine 62. ATP-binding positions include glycine 101, aspartate 122, 129–133, lysine 146, and 190–191; these read SNFHR and DN. Residues cysteine 231 and cysteine 234 each coordinate Zn(2+). Residue cysteine 248 is the Glycyl thioester intermediate; for adenylyltransferase activity of the active site. Zn(2+)-binding residues include cysteine 306 and cysteine 309. The region spanning 355 to 451 is the Rhodanese domain; sequence QAKPHLLIDV…WTSNIDPNFP (97 aa). Catalysis depends on cysteine 410, which acts as the Cysteine persulfide intermediate; for sulfurtransferase activity.

The protein in the N-terminal section; belongs to the HesA/MoeB/ThiF family. UBA4 subfamily. It depends on Zn(2+) as a cofactor.

It localises to the cytoplasm. Its subcellular location is the cytosol. The catalysed reaction is [molybdopterin-synthase sulfur-carrier protein]-C-terminal Gly-Gly + ATP + H(+) = [molybdopterin-synthase sulfur-carrier protein]-C-terminal Gly-Gly-AMP + diphosphate. It catalyses the reaction [molybdopterin-synthase sulfur-carrier protein]-C-terminal Gly-Gly-AMP + S-sulfanyl-L-cysteinyl-[cysteine desulfurase] + AH2 = [molybdopterin-synthase sulfur-carrier protein]-C-terminal-Gly-aminoethanethioate + L-cysteinyl-[cysteine desulfurase] + A + AMP + 2 H(+). Its pathway is tRNA modification; 5-methoxycarbonylmethyl-2-thiouridine-tRNA biosynthesis. The protein operates within cofactor biosynthesis; molybdopterin biosynthesis. Its function is as follows. Plays a central role in 2-thiolation of mcm(5)S(2)U at tRNA wobble positions of cytosolic tRNA(Lys), tRNA(Glu) and tRNA(Gln). Also essential during biosynthesis of the molybdenum cofactor. Acts by mediating the C-terminal thiocarboxylation of sulfur carriers URM1 and MOCS2A. Its N-terminus first activates URM1 and MOCS2A as acyl-adenylates (-COAMP), then the persulfide sulfur on the catalytic cysteine is transferred to URM1 and MOCS2A to form thiocarboxylation (-COSH) of their C-terminus. The reaction probably involves hydrogen sulfide that is generated from the persulfide intermediate and that acts as a nucleophile towards URM1 and MOCS2A. Subsequently, a transient disulfide bond is formed. Does not use thiosulfate as sulfur donor; NFS1 probably acting as a sulfur donor for thiocarboxylation reactions. The sequence is that of Adenylyltransferase and sulfurtransferase MOCS3 from Drosophila sechellia (Fruit fly).